Reading from the N-terminus, the 288-residue chain is Bifunctional protein FolD (288 aa).

NADP(+) contacts are provided by residues 166 to 168 (GAS) and Ile-232.

The protein belongs to the tetrahydrofolate dehydrogenase/cyclohydrolase family. Homodimer.

The catalysed reaction is (6R)-5,10-methylene-5,6,7,8-tetrahydrofolate + NADP(+) = (6R)-5,10-methenyltetrahydrofolate + NADPH. The enzyme catalyses (6R)-5,10-methenyltetrahydrofolate + H2O = (6R)-10-formyltetrahydrofolate + H(+). Its pathway is one-carbon metabolism; tetrahydrofolate interconversion. Catalyzes the oxidation of 5,10-methylenetetrahydrofolate to 5,10-methenyltetrahydrofolate and then the hydrolysis of 5,10-methenyltetrahydrofolate to 10-formyltetrahydrofolate. In Salmonella arizonae (strain ATCC BAA-731 / CDC346-86 / RSK2980), this protein is Bifunctional protein FolD.